The sequence spans 312 residues: Lipoyl synthase (312 aa).

[4Fe-4S] cluster is bound by residues cysteine 37, cysteine 42, cysteine 48, cysteine 67, cysteine 71, cysteine 74, and serine 281. One can recognise a Radical SAM core domain in the interval 52–270 (RDGPGTATFM…AVAEREFDFL (219 aa)).

The protein belongs to the radical SAM superfamily. Lipoyl synthase family. [4Fe-4S] cluster serves as cofactor.

The protein localises to the cytoplasm. The enzyme catalyses [[Fe-S] cluster scaffold protein carrying a second [4Fe-4S](2+) cluster] + N(6)-octanoyl-L-lysyl-[protein] + 2 oxidized [2Fe-2S]-[ferredoxin] + 2 S-adenosyl-L-methionine + 4 H(+) = [[Fe-S] cluster scaffold protein] + N(6)-[(R)-dihydrolipoyl]-L-lysyl-[protein] + 4 Fe(3+) + 2 hydrogen sulfide + 2 5'-deoxyadenosine + 2 L-methionine + 2 reduced [2Fe-2S]-[ferredoxin]. It participates in protein modification; protein lipoylation via endogenous pathway; protein N(6)-(lipoyl)lysine from octanoyl-[acyl-carrier-protein]: step 2/2. Functionally, catalyzes the radical-mediated insertion of two sulfur atoms into the C-6 and C-8 positions of the octanoyl moiety bound to the lipoyl domains of lipoate-dependent enzymes, thereby converting the octanoylated domains into lipoylated derivatives. In Halorubrum lacusprofundi (strain ATCC 49239 / DSM 5036 / JCM 8891 / ACAM 34), this protein is Lipoyl synthase.